Consider the following 692-residue polypeptide: ATPase synthesis protein 25, mitochondrial (692 aa).

The N-terminal 73 residues, 1–73, are a transit peptide targeting the mitochondrion; sequence MNRILSKGPR…DGNGNTHRTT (73 aa). Disordered regions lie at residues 44-83, 286-314, and 338-373; these read PRLR…HTPW, RQVS…SSDH, and CRLL…HLAA. Over residues 65-81 the composition is skewed to polar residues; it reads GNGNTHRTTSTASSQHT. Residues 292–302 are compositionally biased toward basic and acidic residues; it reads TKSDAPHEEVR. A compositionally biased stretch (acidic residues) spans 347 to 357; the sequence is DNQDDGLDDGL.

The protein belongs to the ATP25 family.

Its subcellular location is the mitochondrion inner membrane. In terms of biological role, probable mitochondrial mRNA stabilization factor. The polypeptide is ATPase synthesis protein 25, mitochondrial (atp25) (Neosartorya fischeri (strain ATCC 1020 / DSM 3700 / CBS 544.65 / FGSC A1164 / JCM 1740 / NRRL 181 / WB 181) (Aspergillus fischerianus)).